We begin with the raw amino-acid sequence, 301 residues long: MAASTTSRTNSRVNYSNEIHDLSTVQGGSAAAAAAALFYPDSKSIADIFPPHLGKKVISEVVATFLLVFVTCGAASIYGEDNARISQLGQSVAGGLIVTVMIYATGHISGAHMNPAVTLSFACFRHFPWIQVPFYWAAQFTGAMCAAFVLKAVLQPIAVIGTTTPSGPHWHALAIEIVVTFNMMFVTCAVATDSRAVGELAGLAVGSAVCITSIFAGPVSGGSMNPARTLAPAVASNVFTGLWIYFLGPVVGTLSGAWVYTYIRFEEAPAAAKPDTQRLSSFKLRRMQSQSALAADEFDTV.

The next 2 membrane-spanning stretches (helical) occupy residues 57 to 77 (VISE…AASI) and 91 to 111 (SVAG…ISGA). The NPA 1 signature appears at 114-116 (NPA). 3 consecutive transmembrane segments (helical) span residues 132–154 (VPFY…KAVL), 172–192 (ALAI…AVAT), and 200–220 (LAGL…GPVS). The short motif at 225 to 227 (NPA) is the NPA 2 element. Residues 238–258 (VFTGLWIYFLGPVVGTLSGAW) traverse the membrane as a helical segment.

It belongs to the MIP/aquaporin (TC 1.A.8) family. NIP (TC 1.A.8.12) subfamily.

It is found in the membrane. Functionally, aquaporins facilitate the transport of water and small neutral solutes across cell membranes. The chain is Aquaporin NIP2-3 (NIP2-3) from Zea mays (Maize).